We begin with the raw amino-acid sequence, 21 residues long: Dahlein-5.6 (21 aa).

Expressed by the skin dorsal glands.

It localises to the secreted. Its function is as follows. Has no antimicrobial activity. Strongly inhibits the formation of NO by neuronal nitric oxide synthase at micromolar concentrations. The protein is Dahlein-5.6 of Ranoidea dahlii (Dahl's aquatic frog).